The primary structure comprises 360 residues: UDP-N-acetylglucosamine--N-acetylmuramyl-(pentapeptide) pyrophosphoryl-undecaprenol N-acetylglucosamine transferase (360 aa).

Positions 198 and 289 each coordinate UDP-N-acetyl-alpha-D-glucosamine.

It belongs to the glycosyltransferase 28 family. MurG subfamily.

The protein localises to the cell membrane. The enzyme catalyses Mur2Ac(oyl-L-Ala-gamma-D-Glu-L-Lys-D-Ala-D-Ala)-di-trans,octa-cis-undecaprenyl diphosphate + UDP-N-acetyl-alpha-D-glucosamine = beta-D-GlcNAc-(1-&gt;4)-Mur2Ac(oyl-L-Ala-gamma-D-Glu-L-Lys-D-Ala-D-Ala)-di-trans,octa-cis-undecaprenyl diphosphate + UDP + H(+). It functions in the pathway cell wall biogenesis; peptidoglycan biosynthesis. In terms of biological role, cell wall formation. Catalyzes the transfer of a GlcNAc subunit on undecaprenyl-pyrophosphoryl-MurNAc-pentapeptide (lipid intermediate I) to form undecaprenyl-pyrophosphoryl-MurNAc-(pentapeptide)GlcNAc (lipid intermediate II). The protein is UDP-N-acetylglucosamine--N-acetylmuramyl-(pentapeptide) pyrophosphoryl-undecaprenol N-acetylglucosamine transferase of Streptococcus pyogenes serotype M49 (strain NZ131).